A 363-amino-acid chain; its full sequence is Carbamoyl phosphate synthase small chain (363 aa).

The interval Met-1 to Gly-172 is CPSase. The L-glutamine site is built by Ser-45, Gly-224, and Gly-226. In terms of domain architecture, Glutamine amidotransferase type-1 spans Lys-176–Gly-362. Cys-252 functions as the Nucleophile in the catalytic mechanism. Leu-253, Gln-256, Asn-294, Gly-296, and Phe-297 together coordinate L-glutamine. Active-site residues include His-335 and Glu-337.

It belongs to the CarA family. Composed of two chains; the small (or glutamine) chain promotes the hydrolysis of glutamine to ammonia, which is used by the large (or ammonia) chain to synthesize carbamoyl phosphate. Tetramer of heterodimers (alpha,beta)4.

The enzyme catalyses hydrogencarbonate + L-glutamine + 2 ATP + H2O = carbamoyl phosphate + L-glutamate + 2 ADP + phosphate + 2 H(+). It carries out the reaction L-glutamine + H2O = L-glutamate + NH4(+). It participates in amino-acid biosynthesis; L-arginine biosynthesis; carbamoyl phosphate from bicarbonate: step 1/1. Its pathway is pyrimidine metabolism; UMP biosynthesis via de novo pathway; (S)-dihydroorotate from bicarbonate: step 1/3. Its function is as follows. Small subunit of the glutamine-dependent carbamoyl phosphate synthetase (CPSase). CPSase catalyzes the formation of carbamoyl phosphate from the ammonia moiety of glutamine, carbonate, and phosphate donated by ATP, constituting the first step of 2 biosynthetic pathways, one leading to arginine and/or urea and the other to pyrimidine nucleotides. The small subunit (glutamine amidotransferase) binds and cleaves glutamine to supply the large subunit with the substrate ammonia. In Leptospira borgpetersenii serovar Hardjo-bovis (strain L550), this protein is Carbamoyl phosphate synthase small chain.